We begin with the raw amino-acid sequence, 201 residues long: Endoribonuclease YbeY (201 aa).

Positions 120, 124, and 130 each coordinate Zn(2+). Residues 151–201 (DGADGADGADGARGAADGAADGGEGRRGDQGRRGDQGRGGGAGEPPAAPAR) are disordered. The span at 173–186 (GEGRRGDQGRRGDQ) shows a compositional bias: basic and acidic residues.

It belongs to the endoribonuclease YbeY family. It depends on Zn(2+) as a cofactor.

The protein localises to the cytoplasm. Functionally, single strand-specific metallo-endoribonuclease involved in late-stage 70S ribosome quality control and in maturation of the 3' terminus of the 16S rRNA. In Frankia casuarinae (strain DSM 45818 / CECT 9043 / HFP020203 / CcI3), this protein is Endoribonuclease YbeY.